The chain runs to 687 residues: Chloride channel protein ClC-Kb (687 aa).

Topologically, residues 1-50 (MEEIVGLREGSPRKPVPLQELWRPCPRIRRNIQGSLEWLKERLFRVGEDW) are cytoplasmic. A run of 2 helical transmembrane segments spans residues 51-82 (YFLVALGVLMALISYAMNFAIGRVVRAHKWLY) and 91-111 (LRYLSWTVYPVALLSFSSGFS). Residues 116–127 (PSSGGSGIPEVK) constitute an intramembrane region (helical). S121 lines the chloride pocket. 2 helical membrane passes run 141-160 (IKNFGAKVVGLSCTLATGST) and 161-180 (IFLGKLGPFVHLSVMIAAYL). N-linked (GlcNAc...) asparagine glycosylation occurs at N193. Positions 203 to 224 (AGAAVGVATVFAAPISGVLFSI) form an intramembrane region, helical. The helical transmembrane segment at 236–255 (YWRGFFAATCGAFMFHLLAV) threads the bilayer. Ca(2+)-binding residues include E259, E261, D278, and E281. Transmembrane regions (helical) follow at residues 282–310 (IFFFVALGAICGILSCGYNYCQRTSLFFL) and 325–342 (PLYSALAAVVLASITYPP). Residues 349-360 (ASRLSMSEYLET) constitute an intramembrane region (helical). 2 consecutive transmembrane segments (helical) span residues 400–420 (GTLVFFLVMKFWMLILATTIP) and 421–440 (IPAGYFLPIFVYGAAIGRLF). Residue F426 participates in chloride binding. The helical intramembrane region spans 464 to 496 (GAYALAGAAAFSGAVTHTLSTALLAFEVSGQIV). A helical transmembrane segment spans residues 500–520 (PVLMAVLAANAICQSYQPSFY). Over 521–687 (DGTIIVKKLP…STLTNPPAPK (167 aa)) the chain is Cytoplasmic. CBS domains follow at residues 551 to 609 (MNCT…DSAS) and 626 to 687 (CPTQ…PAPK).

This sequence belongs to the chloride channel (TC 2.A.49) family. CLCNKB subfamily. Homodimer. Interacts with BSND. N-glycosylated. As to expression, expressed predominantly in the kidney. Expressed in all segments of the nephron examined, including the S2 segment and the glomerulus.

It is found in the basolateral cell membrane. The enzyme catalyses chloride(in) = chloride(out). It catalyses the reaction iodide(out) = iodide(in). It carries out the reaction nitrate(in) = nitrate(out). The catalysed reaction is bromide(in) = bromide(out). In terms of biological role, anion-selective channel permeable to small monovalent anions with ion selectivity for chloride &gt; bromide &gt; nitrate &gt; iodide. Forms a homodimeric channel where each subunit has its own ion conduction pathway. May conduct double-barreled currents controlled by two types of gates, two fast gates that control each subunit independently and a slow common gate that opens and shuts off both subunits simultaneously. Assembles with the regulatory subunit BSND/Barttin for sorting at the basolateral plasma membrane domain and functional switch to the ion conducting state. CLCNKB:BSND channels display mostly a linear current-voltage relationship controlled by common gate. Mediates chloride conductance along nephron segments, namely the thick ascending limb of Henle's loop, convoluted tubule and the collecting duct, contributing to the maintenance of systemic acid-base and electrolyte homeostasis. Conducts chloride currents in the stria vascularis of the inner ear to establish the endocochlear potential necessary for normal hearing. The polypeptide is Chloride channel protein ClC-Kb (Rattus norvegicus (Rat)).